Reading from the N-terminus, the 505-residue chain is Glutamate--tRNA ligase (505 aa).

The short motif at 12 to 22 is the 'HIGH' region element; it reads PSPTGALHIGG. The short motif at 260–264 is the 'KMSKS' region element; that stretch reads KLSKR. Residue K263 participates in ATP binding.

Belongs to the class-I aminoacyl-tRNA synthetase family. Glutamate--tRNA ligase type 1 subfamily. Monomer.

It is found in the cytoplasm. The catalysed reaction is tRNA(Glu) + L-glutamate + ATP = L-glutamyl-tRNA(Glu) + AMP + diphosphate. Functionally, catalyzes the attachment of glutamate to tRNA(Glu) in a two-step reaction: glutamate is first activated by ATP to form Glu-AMP and then transferred to the acceptor end of tRNA(Glu). This is Glutamate--tRNA ligase from Phocaeicola vulgatus (strain ATCC 8482 / DSM 1447 / JCM 5826 / CCUG 4940 / NBRC 14291 / NCTC 11154) (Bacteroides vulgatus).